The following is a 481-amino-acid chain: Pentatricopeptide repeat-containing protein At2g48000 (481 aa).

9 PPR repeats span residues 147–181, 187–221, 222–256, 257–287, 292–324, 328–362, 364–398, 399–433, and 434–469; these read TTSV…QDGP, SVST…NILP, DSST…LVKP, TLAT…VKRH, EIKL…LIPK, KPWL…GLQI, TDGI…GWKM, SRSM…KISR, and SKKT…GHDF.

Belongs to the PPR family. P subfamily.

In Arabidopsis thaliana (Mouse-ear cress), this protein is Pentatricopeptide repeat-containing protein At2g48000.